The primary structure comprises 293 residues: sn-glycerol-3-phosphate transport system permease protein UgpA (293 aa).

The next 6 helical transmembrane spans lie at 10–30 (ILPY…FFWP), 72–92 (VTVI…LLLA), 108–128 (LLIW…LFMF), 156–176 (MILI…LFFV), 204–224 (IIFP…TVYA), and 261–281 (LGSS…LTAF). One can recognise an ABC transmembrane type-1 domain in the interval 66 to 282 (YLNSLKVTVI…AIVIGLTAFQ (217 aa)).

The protein belongs to the binding-protein-dependent transport system permease family. The complex is composed of two ATP-binding proteins (UgpC), two transmembrane proteins (UgpA and UgpE) and a solute-binding protein (UgpB).

Its subcellular location is the cell inner membrane. Its function is as follows. Part of the ABC transporter complex UgpBAEC involved in sn-glycerol-3-phosphate (G3P) import. Probably responsible for the translocation of the substrate across the membrane. The chain is sn-glycerol-3-phosphate transport system permease protein UgpA (ugpA) from Rhizobium meliloti (strain 1021) (Ensifer meliloti).